The sequence spans 872 residues: DNA polymerase 1 (872 aa).

The protein belongs to the DNA polymerase type-B family.

It carries out the reaction DNA(n) + a 2'-deoxyribonucleoside 5'-triphosphate = DNA(n+1) + diphosphate. The polypeptide is DNA polymerase 1 (pol-alpha) (Sulfurisphaera ohwakuensis).